A 328-amino-acid chain; its full sequence is UDP-glucose 4-epimerase (328 aa).

Threonine 119 lines the substrate pocket. Tyrosine 143 functions as the Proton acceptor in the catalytic mechanism.

The protein belongs to the NAD(P)-dependent epimerase/dehydratase family. Requires NAD(+) as cofactor.

The catalysed reaction is UDP-alpha-D-glucose = UDP-alpha-D-galactose. It functions in the pathway carbohydrate metabolism; galactose metabolism. The protein operates within glycan metabolism; exopolysaccharide biosynthesis. The chain is UDP-glucose 4-epimerase (exoB) from Rhizobium meliloti (strain 1021) (Ensifer meliloti).